Reading from the N-terminus, the 237-residue chain is Oligoribonuclease, mitochondrial (237 aa).

Residues 1–25 constitute a mitochondrion transit peptide; sequence MLGVSLGARLLRGVGGRRGQFGARG. In terms of domain architecture, Exonuclease spans 43–207; that stretch reads MVWVDLEMTG…DDISESIKEL (165 aa). Residues D47 and E49 each coordinate Mg(2+). S92 is modified (phosphoserine). Y122 is modified (phosphotyrosine). Mg(2+) is bound at residue D147. At K173 the chain carries N6-acetyllysine. Residue H194 is part of the active site. Position 199 (D199) interacts with Mg(2+).

Belongs to the oligoribonuclease family. In terms of assembly, homodimer. Homotetramer. The cofactor is Mn(2+). It depends on Mg(2+) as a cofactor.

Its subcellular location is the mitochondrion intermembrane space. It localises to the mitochondrion matrix. The protein localises to the mitochondrion. It is found in the cytoplasm. The protein resides in the nucleus. In terms of biological role, 3'-to-5'exoribonuclease that preferentially degrades DNA and RNA oligonucleotides composed of only two nucleotides. Binds and degrades longer oligonucleotides with a lower affinity. Plays dual roles in mitochondria, scavenging nanoRNAs (small RNA oligonucleotides of &lt;5 nucleotides) that are produced by the degradosome and clearing short RNAs that are generated by RNA processing. Essential for correct initiation of mitochondrial transcription, degrading mitochondrial RNA dinucleotides to prevent RNA-primed transcription at non-canonical sites in the mitochondrial genome. Essential for embryonic development. The polypeptide is Oligoribonuclease, mitochondrial (Rexo2) (Mus musculus (Mouse)).